The sequence spans 209 residues: Uracil phosphoribosyltransferase (209 aa).

5-phospho-alpha-D-ribose 1-diphosphate-binding positions include Arg79, Arg104, and 131-139; that span reads DPMLATGGS. Residues Ile194 and 199 to 201 each bind uracil; that span reads GDA. Asp200 is a binding site for 5-phospho-alpha-D-ribose 1-diphosphate.

The protein belongs to the UPRTase family. Mg(2+) is required as a cofactor.

The catalysed reaction is UMP + diphosphate = 5-phospho-alpha-D-ribose 1-diphosphate + uracil. It participates in pyrimidine metabolism; UMP biosynthesis via salvage pathway; UMP from uracil: step 1/1. Its activity is regulated as follows. Allosterically activated by GTP. Catalyzes the conversion of uracil and 5-phospho-alpha-D-ribose 1-diphosphate (PRPP) to UMP and diphosphate. This chain is Uracil phosphoribosyltransferase, found in Latilactobacillus sakei (Lactobacillus sakei).